Here is a 483-residue protein sequence, read N- to C-terminus: MARASSTKARKQRHDPLLKDLDAAQGTLKKINKKKLAQNDAANHDAANEEDGYIDSKASRKILQLAKEQQDEIEGEELAESERNKQFEARFTTMSYDDEDEDEDEDEEAFGEDISDFEPEGDYKEEEEIVEIDEEDAAMFEQYFKKSDDFNSLSGSYNLADKIMASIREKESQVEDMQDDEPLANEQNTSRGNISSGLKSGEGVALPEKVIKAYTTVGSILKTWTHGKLPKLFKVIPSLRNWQDVIYVTNPEEWSPHVVYEATKLFVSNLTAKESQKFINLILLERFRDNIETSEDHSLNYHIYRAVKKSLYKPSAFFKGFLFPLVETGCNVREATIAGSVLAKVSVPALHSSAALSYLLRLPFSPPTTVFIKILLDKKYALPYQTVDDCVYYFMRFRILDDGSNGEDATRVLPVIWHKAFLTFAQRYKNDITQDQRDFLLETVRQRGHKDIGPEIRRELLAGASREFVDPQEANDDLMIDVN.

4 disordered regions span residues 1-21, 33-55, 67-123, and 171-200; these read MARA…LKDL, KKKL…GYID, KEQQ…EGDY, and ESQV…GLKS. A compositionally biased stretch (acidic residues) spans 96-123; sequence YDDEDEDEDEDEEAFGEDISDFEPEGDY. Residue Ser172 is modified to Phosphoserine; by ATM or ATR. The segment covering 174-183 has biased composition (acidic residues); it reads VEDMQDDEPL. A compositionally biased stretch (polar residues) spans 185 to 198; that stretch reads NEQNTSRGNISSGL. Phosphoserine is present on residues Ser190 and Ser404.

This sequence belongs to the bystin family.

It localises to the cytoplasm. The protein localises to the nucleus. Its subcellular location is the nucleolus. Required for normal export of the pre-40S particles from the nucleus to the cytoplasm. Its subcellular location and association with pre-40S subunit shifts from mixed cytoplasm/nucleus to all nuclear in RPS19 disruptions, suggesting it acts after the ribosomal protein. This Saccharomyces cerevisiae (strain ATCC 204508 / S288c) (Baker's yeast) protein is Essential nuclear protein 1 (ENP1).